We begin with the raw amino-acid sequence, 212 residues long: Large ribosomal subunit protein bL25 (212 aa).

The segment at Met-1 to Leu-25 is disordered. The span at Lys-13–Arg-24 shows a compositional bias: basic and acidic residues.

Belongs to the bacterial ribosomal protein bL25 family. CTC subfamily. In terms of assembly, part of the 50S ribosomal subunit; part of the 5S rRNA/L5/L18/L25 subcomplex. Contacts the 5S rRNA. Binds to the 5S rRNA independently of L5 and L18.

Its function is as follows. This is one of the proteins that binds to the 5S RNA in the ribosome where it forms part of the central protuberance. The chain is Large ribosomal subunit protein bL25 from Leptospira borgpetersenii serovar Hardjo-bovis (strain JB197).